A 588-amino-acid chain; its full sequence is Endogenous retrovirus group K member 7 Env polyprotein (588 aa).

The interval 355 to 375 (FIFTLIAVIMGLIAVTATAAV) is fusion peptide. The chain crosses the membrane as a helical span at residues 522–542 (IGSTTIINLILILVCLFCLLL).

The protein belongs to the beta type-B retroviral envelope protein family. HERV class-II K(HML-2) env subfamily. The surface (SU) and transmembrane (TM) proteins form a heterodimer. SU and TM are attached by noncovalent interactions or by a labile interchain disulfide bond. Specific enzymatic cleavages in vivo yield the mature SU and TM proteins. In terms of tissue distribution, expressed in lung, placenta, testis and peripheral blood lymphocytes.

It is found in the virion. The protein localises to the cell membrane. Its function is as follows. Retroviral envelope proteins mediate receptor recognition and membrane fusion during early infection. Endogenous envelope proteins may have kept, lost or modified their original function during evolution. In terms of biological role, SU mediates receptor recognition. Functionally, TM anchors the envelope heterodimer to the viral membrane through one transmembrane domain. The other hydrophobic domain, called fusion peptide, mediates fusion of the viral membrane with the target cell membrane. This chain is Endogenous retrovirus group K member 7 Env polyprotein (ERVK-7), found in Homo sapiens (Human).